Here is a 330-residue protein sequence, read N- to C-terminus: Glycerol-3-phosphate dehydrogenase [NAD(P)+] 1 (330 aa).

3 residues coordinate NADPH: Trp-15, Arg-35, and Lys-105. 3 residues coordinate sn-glycerol 3-phosphate: Lys-105, Gly-133, and Thr-135. Ala-137 serves as a coordination point for NADPH. Positions 188, 241, 251, 252, and 253 each coordinate sn-glycerol 3-phosphate. Residue Lys-188 is the Proton acceptor of the active site. Residue Arg-252 coordinates NADPH. Ile-276 and Glu-278 together coordinate NADPH.

Belongs to the NAD-dependent glycerol-3-phosphate dehydrogenase family.

It localises to the cytoplasm. It catalyses the reaction sn-glycerol 3-phosphate + NAD(+) = dihydroxyacetone phosphate + NADH + H(+). The catalysed reaction is sn-glycerol 3-phosphate + NADP(+) = dihydroxyacetone phosphate + NADPH + H(+). Its pathway is membrane lipid metabolism; glycerophospholipid metabolism. Catalyzes the reduction of the glycolytic intermediate dihydroxyacetone phosphate (DHAP) to sn-glycerol 3-phosphate (G3P), the key precursor for phospholipid synthesis. The chain is Glycerol-3-phosphate dehydrogenase [NAD(P)+] 1 from Sphingopyxis alaskensis (strain DSM 13593 / LMG 18877 / RB2256) (Sphingomonas alaskensis).